A 539-amino-acid chain; its full sequence is Chaperonin GroEL (539 aa).

ATP is bound by residues 29-32, 86-90, Gly-413, 479-481, and Asp-495; these read TLGP, DGTTT, and DAL.

It belongs to the chaperonin (HSP60) family. As to quaternary structure, forms a cylinder of 14 subunits composed of two heptameric rings stacked back-to-back. Interacts with the co-chaperonin GroES.

The protein resides in the cytoplasm. The catalysed reaction is ATP + H2O + a folded polypeptide = ADP + phosphate + an unfolded polypeptide.. Together with its co-chaperonin GroES, plays an essential role in assisting protein folding. The GroEL-GroES system forms a nano-cage that allows encapsulation of the non-native substrate proteins and provides a physical environment optimized to promote and accelerate protein folding. The polypeptide is Chaperonin GroEL (Pseudothermotoga lettingae (strain ATCC BAA-301 / DSM 14385 / NBRC 107922 / TMO) (Thermotoga lettingae)).